We begin with the raw amino-acid sequence, 767 residues long: V-set and immunoglobulin domain-containing protein 10-like 2 (767 aa).

A signal peptide spans 1 to 28; that stretch reads MVGQRAQHSPVSLLLLIHLCLLHLRASG. 3 consecutive Ig-like domains span residues 34–140, 150–234, and 242–324; these read PEAP…SHLT, PQVR…AFLD, and PVIT…TTVQ. Cystine bridges form between C56/C122, C169/C217, and C268/C308. N376 carries an N-linked (GlcNAc...) asparagine glycan. Ig-like domains follow at residues 399 to 499 and 501 to 593; these read PALA…LQLE and PQLD…VLLE. Intrachain disulfides connect C435-C481 and C522-C577. The Fibronectin type-III domain maps to 599-699; it reads APPNVTISRL…EVKIPADPPF (101 aa). 2 N-linked (GlcNAc...) asparagine glycosylation sites follow: N602 and N628. The helical transmembrane segment at 704–724 threads the bilayer; that stretch reads AVLGAAGTGMVVATVASLLVF. Positions 735–754 are disordered; it reads PRLETPTTTPGLDPAQETTD. The span at 739 to 754 shows a compositional bias: polar residues; sequence TPTTTPGLDPAQETTD.

It is found in the membrane. This Homo sapiens (Human) protein is V-set and immunoglobulin domain-containing protein 10-like 2.